Here is a 402-residue protein sequence, read N- to C-terminus: Tryptophan synthase beta chain (402 aa).

Position 92 is an N6-(pyridoxal phosphate)lysine (K92).

Belongs to the TrpB family. Tetramer of two alpha and two beta chains. Pyridoxal 5'-phosphate serves as cofactor.

It carries out the reaction (1S,2R)-1-C-(indol-3-yl)glycerol 3-phosphate + L-serine = D-glyceraldehyde 3-phosphate + L-tryptophan + H2O. It functions in the pathway amino-acid biosynthesis; L-tryptophan biosynthesis; L-tryptophan from chorismate: step 5/5. Functionally, the beta subunit is responsible for the synthesis of L-tryptophan from indole and L-serine. The protein is Tryptophan synthase beta chain of Staphylococcus epidermidis (strain ATCC 35984 / DSM 28319 / BCRC 17069 / CCUG 31568 / BM 3577 / RP62A).